We begin with the raw amino-acid sequence, 376 residues long: Mitogen-activated protein kinase 6 (376 aa).

The Protein kinase domain occupies 43 to 329 (APPIRPIGRG…VDEALHHPYL (287 aa)). ATP contacts are provided by residues 49–57 (IGRGAYGIV) and K72. Catalysis depends on D169, which acts as the Proton acceptor. At T201 the chain carries Phosphothreonine. The short motif at 201–203 (TEY) is the TXY element. Phosphotyrosine is present on Y203.

The protein belongs to the protein kinase superfamily. CMGC Ser/Thr protein kinase family. MAP kinase subfamily. Dually phosphorylated on Thr-201 and Tyr-203, which activates the enzyme.

It carries out the reaction L-seryl-[protein] + ATP = O-phospho-L-seryl-[protein] + ADP + H(+). The enzyme catalyses L-threonyl-[protein] + ATP = O-phospho-L-threonyl-[protein] + ADP + H(+). Activated by threonine and tyrosine phosphorylation. The chain is Mitogen-activated protein kinase 6 (MPK6) from Oryza sativa subsp. japonica (Rice).